The chain runs to 295 residues: Adrenocorticotropic hormone receptor (295 aa).

Residues 1–23 (MRHILNLYENINSTARNNSDCPA) lie on the Extracellular side of the membrane. N-linked (GlcNAc...) asparagine glycans are attached at residues N12 and N17. 2 cysteine pairs are disulfide-bonded: C21–C253 and C245–C251. The helical transmembrane segment at 24–49 (VILPEEIFFTVSIVGVLENLMVLLAV) threads the bilayer. Over 50–58 (AKNKSLQSP) the chain is Cytoplasmic. Residues 59 to 79 (MYFFICSLAISDMLGSLYKIL) form a helical membrane-spanning segment. Topologically, residues 80 to 104 (ENVLIMFRNMGYLEPRGSFESTADD) are extracellular. Residues 105-126 (VVDSLFILSLLGSICSLSVIAA) form a helical membrane-spanning segment. The Cytoplasmic portion of the chain corresponds to 127-147 (DRYITIFHALQYHSIVTMHRA). A helical membrane pass occupies residues 148-168 (LVVLTVLWAGCTGSGITIVTF). The Extracellular segment spans residues 169-180 (SHHVPTVIAFTA). A helical transmembrane segment spans residues 181 to 199 (LFPLMLAFILCLYVHMFLL). Residues 200-217 (ARSHARRTSSLPKANMRG) lie on the Cytoplasmic side of the membrane. The chain crosses the membrane as a helical span at residues 218–244 (AITLTVLLGVFIFCWAPFVLHVLLMTF). Over 245–256 (CPADPYCACYMS) the chain is Extracellular. A helical transmembrane segment spans residues 257 to 278 (LFQVNGVLIMCNAVIDPFIYAF). Residues 279 to 295 (RSPELRVAFKKMVICNW) are Cytoplasmic-facing. A lipid anchor (S-palmitoyl cysteine) is attached at C293.

It belongs to the G-protein coupled receptor 1 family. Homodimer. Interacts with corticotropin (ACTH). Interacts with MRAP; this interaction targets MC2R to the plasma membrane. Interacts with MRAP2; competing with MRAP for binding to MC2R and impairing the binding of corticotropin (ACTH). Ubiquitinated by MGRN1 that may be involved in post-endocytic trafficking and/or degradation of internalized receptor.

It localises to the cell membrane. In terms of biological role, hormone receptor primarily expressed in adrenal cortex that plays a key role in regulating adrenocortical function. Upon corticotropin (ACTH) binding, facilitates the release of adrenal glucocorticoids, including cortisol and corticosterone. In addition, MC2R is required for fetal and neonatal adrenal gland development. Mechanistically, activates adenylate cyclase (cAMP), the MAPK cascade as well as the cAMP-dependent protein kinase A pathway leading to steroidogenic factor 1/NR5A1-mediated transcriptional activation. The protein is Adrenocorticotropic hormone receptor (MC2R) of Ovis aries (Sheep).